A 155-amino-acid polypeptide reads, in one-letter code: uncharacterized protein (155 aa).

Disordered stretches follow at residues 24-63 (RVGY…VVLK) and 80-155 (KAAK…DENE). Positions 43–56 (PDEDGNESDKEDEQ) are enriched in acidic residues. Position 50 is a phosphoserine (serine 50). N6-acetyllysine is present on lysine 108. Polar residues predominate over residues 128-147 (KQSPVRKNSQKQIKNSSLLS). A phosphoserine mark is found at serine 130, serine 147, and serine 150.

This is an uncharacterized protein from Rattus norvegicus (Rat).